A 412-amino-acid polypeptide reads, in one-letter code: Argininosuccinate synthase (412 aa).

Residues 11–19 (AYSGGLDTS) and alanine 37 each bind ATP. 2 residues coordinate L-citrulline: tyrosine 88 and serine 93. 116 to 124 (SHGATGKGN) lines the ATP pocket. Residues threonine 120, asparagine 124, and aspartate 125 each coordinate L-aspartate. Residue asparagine 124 coordinates L-citrulline. L-citrulline-binding residues include arginine 128, serine 181, serine 190, glutamate 271, and tyrosine 283.

Belongs to the argininosuccinate synthase family. As to quaternary structure, homotetramer.

It localises to the cytoplasm. The protein resides in the cytosol. The catalysed reaction is L-citrulline + L-aspartate + ATP = 2-(N(omega)-L-arginino)succinate + AMP + diphosphate + H(+). It functions in the pathway amino-acid biosynthesis; L-arginine biosynthesis; L-arginine from L-ornithine and carbamoyl phosphate: step 2/3. Its pathway is nitrogen metabolism; urea cycle; (N(omega)-L-arginino)succinate from L-aspartate and L-citrulline: step 1/1. In terms of biological role, one of the enzymes of the urea cycle, the metabolic pathway transforming neurotoxic amonia produced by protein catabolism into inocuous urea in the liver of ureotelic animals. Catalyzes the formation of arginosuccinate from aspartate, citrulline and ATP and together with ASL it is responsible for the biosynthesis of arginine in most body tissues. This chain is Argininosuccinate synthase, found in Xenopus tropicalis (Western clawed frog).